Reading from the N-terminus, the 233-residue chain is DnaA regulatory inactivator Hda (233 aa).

This sequence belongs to the DnaA family. HdA subfamily. As to quaternary structure, the active form seems to be an ADP-bound monomer. Forms the RIDA complex (regulatory inactivation of DnaA) of ATP-DnaA, ADP-Hda and the DNA-loaded beta sliding clamp (dnaN).

In terms of biological role, mediates the interaction of DNA replication initiator protein DnaA with DNA polymerase subunit beta sliding clamp (dnaN). Stimulates hydrolysis of ATP-DnaA to ADP-DnaA, rendering DnaA inactive for reinitiation, a process called regulatory inhibition of DnaA or RIDA. This chain is DnaA regulatory inactivator Hda, found in Shigella boydii serotype 4 (strain Sb227).